Consider the following 201-residue polypeptide: Ependymin-related protein 2 (201 aa).

An N-terminal signal peptide occupies residues 1-21 (MILQVVLLLACLSGAIVSTGA). Asn-38 and Asn-137 each carry an N-linked (GlcNAc...) asparagine glycan. The Microbody targeting signal motif lies at 199–201 (CRA).

The protein belongs to the ependymin family. In terms of tissue distribution, component of the acid-soluble and acid-insoluble organic matrix of calcified shell layers (at protein level).

Its subcellular location is the secreted. The sequence is that of Ependymin-related protein 2 from Haliotis asinina (Donkey's ear abalone).